The chain runs to 323 residues: Ribokinase (323 aa).

Residues 26–28, 54–58, and glutamate 155 each bind substrate; these read MTD and GKGAN. Residues asparagine 200, 236–241, and threonine 257 each bind ATP; that span reads TLGASG. K(+)-binding residues include aspartate 264 and threonine 266. ATP-binding positions include 269-270 and asparagine 296; that span reads GD. Residue aspartate 270 coordinates substrate. Aspartate 270 functions as the Proton acceptor in the catalytic mechanism. Residues serine 302, alanine 305, glycine 307, and serine 311 each contribute to the K(+) site.

The protein belongs to the carbohydrate kinase PfkB family. Ribokinase subfamily. Homodimer. Requires Mg(2+) as cofactor.

The protein resides in the cytoplasm. It is found in the nucleus. The enzyme catalyses D-ribose + ATP = D-ribose 5-phosphate + ADP + H(+). The protein operates within carbohydrate metabolism; D-ribose degradation; D-ribose 5-phosphate from beta-D-ribopyranose: step 2/2. With respect to regulation, activated by a monovalent cation that binds near, but not in, the active site. The most likely occupant of the site in vivo is potassium. Ion binding induces a conformational change that may alter substrate affinity. Competitively inhibited by phosphonoacetic acid, etidronate, 2-carboxethylphosphonic acid, N-(phosphonomethyl)glycine, N-(phosphonomethyl)iminodiacetic acid and clodronate. In terms of biological role, catalyzes the phosphorylation of ribose at O-5 in a reaction requiring ATP and magnesium. The resulting D-ribose-5-phosphate can then be used either for sythesis of nucleotides, histidine, and tryptophan, or as a component of the pentose phosphate pathway. The protein is Ribokinase of Mus musculus (Mouse).